A 638-amino-acid polypeptide reads, in one-letter code: 1-deoxy-D-xylulose-5-phosphate synthase (638 aa).

Thiamine diphosphate-binding positions include H79 and 120 to 122; that span reads AHS. D151 contacts Mg(2+). Thiamine diphosphate is bound by residues 152-153, N180, Y289, and E371; that span reads GA. N180 serves as a coordination point for Mg(2+).

It belongs to the transketolase family. DXPS subfamily. Homodimer. Mg(2+) is required as a cofactor. Thiamine diphosphate serves as cofactor.

The catalysed reaction is D-glyceraldehyde 3-phosphate + pyruvate + H(+) = 1-deoxy-D-xylulose 5-phosphate + CO2. It functions in the pathway metabolic intermediate biosynthesis; 1-deoxy-D-xylulose 5-phosphate biosynthesis; 1-deoxy-D-xylulose 5-phosphate from D-glyceraldehyde 3-phosphate and pyruvate: step 1/1. In terms of biological role, catalyzes the acyloin condensation reaction between C atoms 2 and 3 of pyruvate and glyceraldehyde 3-phosphate to yield 1-deoxy-D-xylulose-5-phosphate (DXP). The chain is 1-deoxy-D-xylulose-5-phosphate synthase from Rhizobium rhizogenes (strain K84 / ATCC BAA-868) (Agrobacterium radiobacter).